Consider the following 415-residue polypeptide: GPI mannosyltransferase 1 (415 aa).

A run of 9 helical transmembrane segments spans residues 8–28 (PSLV…YGAW), 82–102 (FFSF…WLIA), 134–154 (TRGS…WAVL), 158–178 (ITLA…PFVY), 222–242 (LLLT…MYIL), 284–304 (FESL…PIVL), 329–349 (SQYF…SSLM), 354–374 (LGIT…QQGY), and 387–407 (GLFL…GIII).

The protein belongs to the PIGM family.

The protein localises to the endoplasmic reticulum membrane. Its pathway is glycolipid biosynthesis; glycosylphosphatidylinositol-anchor biosynthesis. Its function is as follows. Mannosyltransferase involved in glycosylphosphatidylinositol-anchor biosynthesis. Transfers the first alpha-1,4-mannose to GlcN-acyl-PI during GPI precursor assembly. Required for cell wall integrity. This chain is GPI mannosyltransferase 1 (gpi14), found in Aspergillus oryzae (strain ATCC 42149 / RIB 40) (Yellow koji mold).